The sequence spans 731 residues: MARGDNMKSSNKSTPEPTLSKTLVESSTSSLLSESVVEPEDGQDLSSSAVCSASTVSLPPNENQPIGEHDRCRTVPVLHSIIVERYEGEKCGEMFHGEGVAYFQGGHVYKGSFSHGLMHGYGEYIWSDGLKYQGDFKVNVPMGHGTYTWLNGSTYEGEVHQGIRHGVGMYKCVKTLTVYRGQWYLGKRQGQGEMFYNQEATSWYKGEWVNNCREGWGKRCYPSGNVYEGQWRNNVRHGEGTMRWIDLDQQYSGQWINGIQEGKGTHTWFRKRAPSSQYPRMNEYTGDFVQAMRHGQGQFLYASGALYCGQWKYDKKHGQGRYIFENGRVYEGEFSKDCMAEFPAFTPGLSGITTPFPDENDSSKGASQSSSNASPLGSDMVLNIQTLLNRVSEAHREQEFKQVEFAVLRHMGLLREIYSFYSSLGHEQSLDKIFPLTHLQFSRFLLDCRVHQHGVTLAQIYSLINVHSPFTAILPRECISYIIIIAYHICHKDIESSNNILAACFSKLMKQNIIPNAKSVKGHLFCHPVHAAVAMNYSDKSWEIYQALCEAHSVFTVRQFVLMLKDLCLYDNELTVSKLIRTLSVDSPAIHDGTYSNLDLEMSFLEFFEALLGCAELKGQKIQSYDESQTDASLQDHISSLSKEKEQRQSPVLAYQETELNDWMHKTQQFFNQTFLPAYELKVKVEEETFRLRDNTTTRYTEQLELKEKQEQDADGNELCPVTTTSVTSIH.

A disordered region spans residues 1–69; that stretch reads MARGDNMKSS…PNENQPIGEH (69 aa). Positions 7–17 are enriched in polar residues; sequence MKSSNKSTPEP. 2 stretches are compositionally biased toward low complexity: residues 18–36 and 46–57; these read TLSKTLVESSTSSLLSESV and SSSAVCSASTVS. MORN repeat units lie at residues 86 to 108, 109 to 131, 132 to 154, 155 to 177, 179 to 201, 204 to 226, 227 to 249, 251 to 273, 284 to 306, and 307 to 329; these read YEGEKCGEMFHGEGVAYFQGGHV, YKGSFSHGLMHGYGEYIWSDGLK, YQGDFKVNVPMGHGTYTWLNGST, YEGEVHQGIRHGVGMYKCVKTLT, YRGQWYLGKRQGQGEMFYNQEAT, YKGEWVNNCREGWGKRCYPSGNV, YEGQWRNNVRHGEGTMRWIDLDQ, YSGQWINGIQEGKGTHTWFRKRA, YTGDFVQAMRHGQGQFLYASGAL, and YCGQWKYDKKHGQGRYIFENGRV. Disordered stretches follow at residues 353 to 377 and 709 to 731; these read TTPFPDENDSSKGASQSSSNASPLG and KQEQDADGNELCPVTTTSVTSIH. The segment covering 363–377 has biased composition (low complexity); it reads SKGASQSSSNASPLG. Polar residues predominate over residues 722-731; sequence VTTTSVTSIH.

Its subcellular location is the cytoplasm. The protein localises to the cytoskeleton. It localises to the cilium axoneme. It is found in the cell projection. The protein resides in the cilium. Its subcellular location is the flagellum. May function as part of axonemal radial spoke complexes. Radial spoke complexes are important for ciliary motility. The protein is Radial spoke head 10 homolog B (rsph10b) of Danio rerio (Zebrafish).